The following is an 88-amino-acid chain: Meiosis-expressed gene 1 protein (88 aa).

This sequence belongs to the MEIG1 family. In terms of assembly, interacts with PACRG. Interacts with MORN3. In terms of tissue distribution, expressed in the testes (at protein level). Expressed in the ovary. Several isoforms have been identified differing in their 5'-untranslated exons. These isoforms show different tissue expression. Some are expressed in various tissues, including lung, liver, brain, testis, oviduct and oocytes. Some are testis-specific.

Essential for spermiogenesis. The polypeptide is Meiosis-expressed gene 1 protein (Mus musculus (Mouse)).